A 278-amino-acid polypeptide reads, in one-letter code: Putative pyruvate, phosphate dikinase regulatory protein (278 aa).

156 to 163 (GVSRTSKT) provides a ligand contact to ADP.

The protein belongs to the pyruvate, phosphate/water dikinase regulatory protein family. PDRP subfamily.

It catalyses the reaction N(tele)-phospho-L-histidyl/L-threonyl-[pyruvate, phosphate dikinase] + ADP = N(tele)-phospho-L-histidyl/O-phospho-L-threonyl-[pyruvate, phosphate dikinase] + AMP + H(+). The enzyme catalyses N(tele)-phospho-L-histidyl/O-phospho-L-threonyl-[pyruvate, phosphate dikinase] + phosphate + H(+) = N(tele)-phospho-L-histidyl/L-threonyl-[pyruvate, phosphate dikinase] + diphosphate. Functionally, bifunctional serine/threonine kinase and phosphorylase involved in the regulation of the pyruvate, phosphate dikinase (PPDK) by catalyzing its phosphorylation/dephosphorylation. The chain is Putative pyruvate, phosphate dikinase regulatory protein from Lactobacillus acidophilus (strain ATCC 700396 / NCK56 / N2 / NCFM).